Reading from the N-terminus, the 682-residue chain is MPRERQKRGRRAEAKRKRDDEVGDRTAPKRQKASEGDNDFNPLHSQAKIGDDYIPLEEEPASSMDTPFYGLLDPDEQEYFSHASGLLELNQFETEEEKSIFIERVYEEADGKELKIACSQSCSRLMEKLISASTVSQIKSLFNKFVGQFLNLVQHRFASHCCESLFLRAAPYVTLEMKKNSAEKNDNECEDSSANLRLEDLFLAVLSELEGNWGYLLTERFASHTIRVLLLILAGEQLDNPSKATVIASRKKENLDKPKVTQRDKSASDRRAVPPSFNAALEKMMNDLVTGLDNTYLRALATHPVGNPVLQVLLSVELTHLGKSKARDPDSVFRRLVPDENLEEGSESAAFIKGLFYDPVGSRLLETMVQLAPGKFFKTFYKALVLERIGSLSRNEIAGHVVARILERLSKEDLKSSMDLILPEVLSLVKRSRFTVIKTLIERGVIRGVDLRPLADSLLLAFGTDPIARINNVLKLHHLNEENDDTKRSSKNSTPEQLHGSLLAQTMLKAPGPLSELIQSSLLAVTLETLIAIAKDPVASHVLQDALTLPTSTIQFRRQITSRFSGKMAELALDSSGSHVVDAVWSATENLIFIKQRFAEELLANERPLRDSFVGRAVWKNWSMDLYKRRRGHWIAVAKGLESVNPSNSENRQPPKSNLDLARARFAEKSNTSTPKKISATF.

Over residues 1–15 (MPRERQKRGRRAEAK) the composition is skewed to basic residues. The disordered stretch occupies residues 1-46 (MPRERQKRGRRAEAKRKRDDEVGDRTAPKRQKASEGDNDFNPLHSQ). Residues 16 to 35 (RKRDDEVGDRTAPKRQKASE) are compositionally biased toward basic and acidic residues. The stretch at 108–143 (EADGKELKIACSQSCSRLMEKLISASTVSQIKSLFN) is one Pumilio 1 repeat. The disordered stretch occupies residues 249-272 (SRKKENLDKPKVTQRDKSASDRRA). Basic and acidic residues predominate over residues 250 to 272 (RKKENLDKPKVTQRDKSASDRRA). Pumilio repeat units lie at residues 347-382 (ESAA…TFYK), 383-419 (ALVL…SSMD), 524-562 (AVTL…QITS), and 563-600 (RFSG…RFAE).

It belongs to the NOP9 family.

Its subcellular location is the nucleus. The protein resides in the nucleolus. Functionally, RNA-binding nucleolar protein required for pre-rRNA processing. Involved in production of 18S rRNA and assembly of small ribosomal subunit. The sequence is that of Nucleolar protein 9 (NOP9) from Blastomyces gilchristii (strain SLH14081) (Blastomyces dermatitidis).